The primary structure comprises 263 residues: Small ribosomal subunit protein eS4 (263 aa).

Residues 42 to 104 form the S4 RNA-binding domain; sequence LPLVIFLRNR…TNELFRLIYD (63 aa).

The protein belongs to the eukaryotic ribosomal protein eS4 family.

The polypeptide is Small ribosomal subunit protein eS4 (RpS4) (Spodoptera frugiperda (Fall armyworm)).